Consider the following 524-residue polypeptide: Probable glutamyl-tRNA reductase 3, chloroplastic (524 aa).

Residues 1-52 (MAVSNASVVLSPNLETSSSWYHHNPSSSLDLIRIHTLPMNKMTRRGLIQRVR) constitute a chloroplast transit peptide. Substrate contacts are provided by residues 129–132 (TCNR), Ser189, 194–196 (ENQ), and Gln200. Catalysis depends on Cys130, which acts as the Nucleophile. 269 to 274 (GAGEMG) is an NADP(+) binding site.

The protein belongs to the glutamyl-tRNA reductase family.

The protein localises to the plastid. The protein resides in the chloroplast. The enzyme catalyses (S)-4-amino-5-oxopentanoate + tRNA(Glu) + NADP(+) = L-glutamyl-tRNA(Glu) + NADPH + H(+). Its pathway is porphyrin-containing compound metabolism; protoporphyrin-IX biosynthesis; 5-aminolevulinate from L-glutamyl-tRNA(Glu): step 1/2. The protein operates within porphyrin-containing compound metabolism; chlorophyll biosynthesis. Its function is as follows. Catalyzes the NADPH-dependent reduction of glutamyl-tRNA(Glu) to glutamate 1-semialdehyde (GSA). This chain is Probable glutamyl-tRNA reductase 3, chloroplastic (HEMA3), found in Arabidopsis thaliana (Mouse-ear cress).